The primary structure comprises 141 residues: Hemoglobin subunit alpha-1 (141 aa).

Residues 1 to 141 (VLSEGNKKAI…VTYQLSSLYR (141 aa)) enclose the Globin domain. Histidine 59 contacts O2. Heme b is bound at residue histidine 88.

Belongs to the globin family. In terms of assembly, heterotetramer of two alpha chains and two beta chains. In terms of tissue distribution, red blood cells.

In terms of biological role, involved in oxygen transport from the lung to the various peripheral tissues. The chain is Hemoglobin subunit alpha-1 from Torpedo marmorata (Marbled electric ray).